The chain runs to 681 residues: Conserved oligomeric Golgi complex subunit 2 (681 aa).

The protein belongs to the COG2 family. In terms of assembly, component of the conserved oligomeric Golgi complex which is composed of eight different subunits and is required for normal Golgi morphology and localization.

It localises to the golgi apparatus membrane. In terms of biological role, required for normal Golgi morphology and function. This is Conserved oligomeric Golgi complex subunit 2 (cogc-2) from Caenorhabditis elegans.